The chain runs to 228 residues: Aquaporin Z (228 aa).

Transmembrane regions (helical) follow at residues 1 to 21 (MLNK…GGCG) and 23 to 43 (AILA…ALAF). The NPA 1 signature appears at 63 to 65 (NPA). Transmembrane regions (helical) follow at residues 82–102 (IPYW…LYVI), 129–149 (MMAG…IILG), and 154–174 (LAPA…IHLV). An NPA 2 motif is present at residues 184–186 (NPA). Residues 205–225 (LFWVAPLVGAVIGAIIWKGLL) form a helical membrane-spanning segment.

The protein belongs to the MIP/aquaporin (TC 1.A.8) family. In terms of assembly, homotetramer.

It is found in the cell inner membrane. It catalyses the reaction H2O(in) = H2O(out). Functionally, channel that permits osmotically driven movement of water in both directions. It is involved in the osmoregulation and in the maintenance of cell turgor during volume expansion in rapidly growing cells. It mediates rapid entry or exit of water in response to abrupt changes in osmolarity. This is Aquaporin Z from Brucella melitensis biotype 1 (strain ATCC 23456 / CCUG 17765 / NCTC 10094 / 16M).